Here is a 570-residue protein sequence, read N- to C-terminus: Sulfite reductase [NADPH] hemoprotein beta-component (570 aa).

[4Fe-4S] cluster-binding residues include C434, C440, C479, and C483. Position 483 (C483) interacts with siroheme.

This sequence belongs to the nitrite and sulfite reductase 4Fe-4S domain family. In terms of assembly, alpha(8)-beta(8). The alpha component is a flavoprotein, the beta component is a hemoprotein. It depends on siroheme as a cofactor. [4Fe-4S] cluster serves as cofactor.

The enzyme catalyses hydrogen sulfide + 3 NADP(+) + 3 H2O = sulfite + 3 NADPH + 4 H(+). It functions in the pathway sulfur metabolism; hydrogen sulfide biosynthesis; hydrogen sulfide from sulfite (NADPH route): step 1/1. Functionally, component of the sulfite reductase complex that catalyzes the 6-electron reduction of sulfite to sulfide. This is one of several activities required for the biosynthesis of L-cysteine from sulfate. In Escherichia fergusonii (strain ATCC 35469 / DSM 13698 / CCUG 18766 / IAM 14443 / JCM 21226 / LMG 7866 / NBRC 102419 / NCTC 12128 / CDC 0568-73), this protein is Sulfite reductase [NADPH] hemoprotein beta-component.